Here is a 346-residue protein sequence, read N- to C-terminus: Sensor histidine kinase GraS (346 aa).

Helical transmembrane passes span 15–35 (MNWI…SLID) and 43–63 (LFYI…LTYF). Positions 126 to 332 (EFVHDIKTPV…TVRLIFPLQN (207 aa)) constitute a Histidine kinase domain.

As to quaternary structure, interacts with GraX.

Its subcellular location is the cell membrane. It catalyses the reaction ATP + protein L-histidine = ADP + protein N-phospho-L-histidine.. Functionally, member of the two-component regulatory system GraR/GraS involved in resistance against cationic antimicrobial peptides (CAMPs). Functions as a sensor protein kinase which phosphorylates GraR through the auxiliary protein GraX. In turn, GraR up-regulates many genes such as adhesins, exoproteins, transporters, toxins, and proteins involved in cell wall synthesis. Down-regulates the expression of many genes involved in RNA and amino acid synthesis or glycolysis. This chain is Sensor histidine kinase GraS (graS), found in Staphylococcus aureus (strain COL).